The chain runs to 780 residues: Tyrosine-protein phosphatase non-receptor type 12 (780 aa).

M1 bears the N-acetylmethionine mark. The residue at position 19 (S19) is a Phosphoserine. One can recognise a Tyrosine-protein phosphatase domain in the interval 28 to 293; that stretch reads FARDFMRLRR…ELVHRAIAQL (266 aa). Residues R36, 63 to 67, D199, 231 to 237, and Q278 contribute to the substrate site; these read RYKDI and CSAGCGR. C231 serves as the catalytic Phosphocysteine intermediate. Residues S332, S435, S449, and S468 each carry the phosphoserine modification. The tract at residues 345–438 is interaction with TGFB1I1; that stretch reads VEGDAKEEIL…KLERNLSFEI (94 aa). The span at 502 to 519 shows a compositional bias: polar residues; sequence QSNKVSVTPPEESQNSDT. Disordered stretches follow at residues 502 to 639, 657 to 725, and 744 to 780; these read QSNK…STES, GTTH…EKCD, and SDKR…SEWT. Residues T509 and T519 each carry the phosphothreonine modification. The span at 521 to 533 shows a compositional bias: basic and acidic residues; that stretch reads PRPDRLPLDEKGH. Polar residues-rich tracts occupy residues 552–577 and 587–601; these read EGNS…TQVE and TSPL…TNPL. At S567 the chain carries Phosphoserine. T569 bears the Phosphothreonine mark. A phosphoserine mark is found at S571 and S596. Residue T598 is modified to Phosphothreonine. The segment covering 602-613 has biased composition (basic and acidic residues); that stretch reads HSDDSDSDERNS. A phosphoserine mark is found at S603, S606, S608, and S613. Positions 622–639 are enriched in low complexity; it reads TNISTASATVSAATSTES. Residues S673 and S689 each carry the phosphoserine modification. Polar residues predominate over residues 690-703; the sequence is EHNTPVRSEWSELQ. A Phosphothreonine modification is found at T693. Composition is skewed to basic and acidic residues over residues 704–725 and 771–780; these read SQER…EKCD and GPRDPPSEWT.

It belongs to the protein-tyrosine phosphatase family. Non-receptor class 4 subfamily. In terms of assembly, interacts with TGFB1I1. Interacts with PSTPIP1. Interacts with PTK2B/PYK2. Interacts with LPXN. Interacts with SORBS2; this interaction greatly enhances WASF1 dephosphorylation and might mediate partial translocation to focal adhesion sites. Phosphorylated by STK24/MST3 and this results in inhibition of its activity.

The protein resides in the cytoplasm. The protein localises to the cell junction. It localises to the focal adhesion. Its subcellular location is the cell projection. It is found in the podosome. The catalysed reaction is O-phospho-L-tyrosyl-[protein] + H2O = L-tyrosyl-[protein] + phosphate. In terms of biological role, dephosphorylates a range of proteins, and thereby regulates cellular signaling cascades. Dephosphorylates cellular tyrosine kinases, such as ERBB2 and PTK2B/PYK2, and thereby regulates signaling via ERBB2 and PTK2B/PYK2. Selectively dephosphorylates ERBB2 phosphorylated at 'Tyr-1112', 'Tyr-1196', and/or 'Tyr-1248'. The sequence is that of Tyrosine-protein phosphatase non-receptor type 12 (PTPN12) from Homo sapiens (Human).